Consider the following 516-residue polypeptide: Extracellular endo-inulinase inu2 (516 aa).

A signal peptide spans M1–A23. Substrate is bound by residues M41–E43 and N61. E43 is an active-site residue. N-linked (GlcNAc...) asparagine glycosylation is found at N108 and N109. Residue D176 participates in substrate binding. N-linked (GlcNAc...) asparagine glycosylation occurs at N210. N320 lines the substrate pocket. A glycan (N-linked (GlcNAc...) asparagine) is linked at N372.

Belongs to the glycosyl hydrolase 32 family.

It is found in the secreted. It carries out the reaction Endohydrolysis of (2-&gt;1)-beta-D-fructosidic linkages in inulin.. Functionally, endo-inulinase involved in utilization of the plant storage polymer inulin, consisting of fructooligosaccharides with a degree of polymerization (DP) value from 2 to 60. This Aspergillus ficuum protein is Extracellular endo-inulinase inu2 (inu2).